We begin with the raw amino-acid sequence, 412 residues long: Phytoene synthase, chloroplastic (412 aa).

This sequence belongs to the phytoene/squalene synthase family. Monomer. As to expression, expressed in roots, leaves, flower buds, sepals, petals, lips and lip crests.

It is found in the plastid. It localises to the chloroplast. The enzyme catalyses 2 (2E,6E,10E)-geranylgeranyl diphosphate = 15-cis-phytoene + 2 diphosphate. The protein operates within carotenoid biosynthesis; phytoene biosynthesis; all-trans-phytoene from geranylgeranyl diphosphate: step 1/1. Its function is as follows. Catalyzes the reaction from prephytoene diphosphate to phytoene. The sequence is that of Phytoene synthase, chloroplastic (PSY) from Oncidium hybrid cultivar (Orchid).